We begin with the raw amino-acid sequence, 445 residues long: Neuropeptide Y receptor type 5 (445 aa).

Over Met-1–Tyr-42 the chain is Extracellular. N-linked (GlcNAc...) asparagine glycans are attached at residues Asn-10 and Asn-17. The helical transmembrane segment at Phe-43 to Leu-63 threads the bilayer. The Cytoplasmic segment spans residues Met-64 to Asn-77. A helical membrane pass occupies residues Phe-78–Thr-98. Residues Leu-99 to Met-117 lie on the Extracellular side of the membrane. Residues Cys-114 and Cys-198 are joined by a disulfide bond. The helical transmembrane segment at Pro-118 to Val-138 threads the bilayer. Over Arg-139–Gly-156 the chain is Cytoplasmic. The helical transmembrane segment at Tyr-157–Phe-177 threads the bilayer. The Extracellular segment spans residues His-178–Arg-208. The chain crosses the membrane as a helical span at residues Ile-209–Val-229. The Cytoplasmic segment spans residues Ser-230–Arg-368. A helical transmembrane segment spans residues Leu-369–Val-389. Residues Thr-390–Tyr-406 lie on the Extracellular side of the membrane. The chain crosses the membrane as a helical span at residues Cys-407 to Leu-427. At Asn-428–Ser-445 the chain is on the cytoplasmic side. A lipid anchor (S-palmitoyl cysteine) is attached at Cys-441.

The protein belongs to the G-protein coupled receptor 1 family. In terms of tissue distribution, brain; hypothalamus.

Its subcellular location is the cell membrane. Its function is as follows. Receptor for neuropeptide Y and peptide YY. The activity of this receptor is mediated by G proteins that inhibit adenylate cyclase activity. Seems to be associated with food intake. Could be involved in feeding disorders. The sequence is that of Neuropeptide Y receptor type 5 (Npy5r) from Rattus norvegicus (Rat).